The chain runs to 410 residues: Lipid droplet-regulating VLDL assembly factor AUP1 (410 aa).

Methionine 1 is subject to N-acetylmethionine. Residues 1–20 (MELPSGPGPERLFDSHRLPG) are Cytoplasmic-facing. Serine 5 carries the phosphoserine modification. An intramembrane segment occupies 21–41 (DCFLLLVLLLYAPVGFCLLVL). Residues 42-410 (RLFLGIHVFL…FTERRAQEAD (369 aa)) are Cytoplasmic-facing. The interval 255 to 295 (TGTRLTPADKAEHMKRQRHPRLRPQSAQSSFPPSPGPSPDV) is disordered. Residues serine 288 and serine 292 each carry the phosphoserine modification. Residues 296–338 (QLATLAQRVKEVLPHVPLGVIQRDLAKTGCVDLTITNLLEGAV) enclose the CUE domain. Residues 350-369 (QSLPTASASKFPSSGPVTPQ) form a disordered region. Position 363 is a phosphoserine (serine 363). The residue at position 367 (threonine 367) is a Phosphothreonine.

It belongs to the AUP1 family. In terms of assembly, identified in a complex that contains SEL1L, OS9, FAF2/UBXD8, UBE2J1/UBC6E and AUP1. Interacts with the cytoplasmic tail of ITGA2B, ITGA1, ITGA2, ITGA5, ITGAV and ITGAM. Interacts (via C-terminus) with ubiquitin-conjugating enzyme UBE2G2; the interaction recruits UBE2G2 to lipid droplets. Interacts with ubiquitin ligases AMFR/gp78 and RNF139/TRC8; this promotes interaction of UBE2G2 with AMFR and RNF139. Interacts with apolipoprotein APOB. (Microbial infection) Interacts with Dengue virus NS4A; the interaction occurs in the presence of Dengue virus NS4B and induces lipophagy which facilitates production of virus progeny. Post-translationally, monoubiquitinated and diubiquitinated. In terms of processing, (Microbial infection) Not ubiquitinated following Dengue virus infection. As to expression, detected in blood platelets and leukocytes (at protein level). Ubiquitous. Highly expressed in placenta, liver, kidney, skeletal muscle, heart and brain.

It is found in the endoplasmic reticulum membrane. The protein localises to the lipid droplet. Its subcellular location is the cytoplasmic vesicle. It localises to the autophagosome. In terms of biological role, plays a role in the translocation of terminally misfolded proteins from the endoplasmic reticulum lumen to the cytoplasm and their degradation by the proteasome. Plays a role in lipid droplet formation. Induces lipid droplet clustering. Recruits ubiquitin-conjugating enzyme UBE2G2 to lipid droplets which facilitates its interaction with ubiquitin ligases AMFR/gp78 and RNF139/TRC8, leading to sterol-induced ubiquitination of HMGCR and its subsequent proteasomal degradation. Also required for the degradation of INSIG1, SREBF1 and SREBF2. Plays a role in regulating assembly and secretion of very low density lipoprotein particles and stability of apolipoprotein APOB. Functionally, (Microbial infection) Following Dengue virus infection, required for induction of lipophagy which facilitates production of virus progeny particles. The chain is Lipid droplet-regulating VLDL assembly factor AUP1 from Homo sapiens (Human).